The sequence spans 315 residues: Methylglutaconyl-CoA hydratase, mitochondrial (315 aa).

The N-terminal 43 residues, 1–43 (MAAAAAPGALGALSAGRVRLVAACCARLGSAAWARGTAPRRGY), are a transit peptide targeting the mitochondrion. Lysine 76 carries the post-translational modification N6-acetyllysine; alternate. The residue at position 76 (lysine 76) is an N6-succinyllysine; alternate. The RNA-binding stretch occupies residues 81–95 (KNLLKMLSKAVDALK). Position 85 is an N6-succinyllysine (lysine 85). Lysine 89 and lysine 120 each carry N6-acetyllysine; alternate. Lysine 89 and lysine 120 each carry N6-succinyllysine; alternate. N6-succinyllysine occurs at positions 124 and 136. Residues lysine 180 and lysine 187 each carry the N6-acetyllysine; alternate modification. N6-succinyllysine; alternate is present on residues lysine 180 and lysine 187. N6-succinyllysine is present on lysine 305.

Belongs to the enoyl-CoA hydratase/isomerase family. As to quaternary structure, homohexamer.

The protein resides in the mitochondrion. The catalysed reaction is (3S)-3-hydroxy-3-methylglutaryl-CoA = 3-methyl-(2E)-glutaconyl-CoA + H2O. The enzyme catalyses (3S)-citramalyl-CoA = itaconyl-CoA + H2O. It carries out the reaction 3-hydroxyisovaleryl-CoA = 3-methylbut-2-enoyl-CoA + H2O. It catalyses the reaction (S)-3-hydroxyglutaryl-CoA = (2E)-glutaconyl-CoA + H2O. The protein operates within amino-acid degradation; L-leucine degradation; (S)-3-hydroxy-3-methylglutaryl-CoA from 3-isovaleryl-CoA: step 3/3. Its function is as follows. Catalyzes the fifth step in the leucine degradation pathway, the reversible hydration of 3-methylglutaconyl-CoA (3-MG-CoA) to 3-hydroxy-3-methylglutaryl-CoA (HMG-CoA). Can catalyze the reverse reaction but at a much lower rate in vitro. HMG-CoA is then quickly degraded by another enzyme (such as HMG-CoA lyase) to give acetyl-CoA and acetoacetate. Uses other substrates such as (2E)-glutaconyl-CoA efficiently in vitro, and to a lesser extent 3-methylcrotonyl-CoA (3-methyl-(2E)-butenoyl-CoA), crotonyl-CoA ((2E)-butenoyl-CoA) and 3-hydroxybutanoyl-CoA (the missing carboxylate reduces affinity to the active site). Originally it was identified as an RNA-binding protein as it binds to AU-rich elements (AREs) in vitro. AREs direct rapid RNA degradation and mRNA deadenylation. Might have itaconyl-CoA hydratase activity, converting itaconyl-CoA into citramalyl-CoA in the C5-dicarboxylate catabolism pathway. The C5-dicarboxylate catabolism pathway is required to detoxify itaconate, an antimicrobial metabolite and immunomodulator produced by macrophages during certain infections, that can act as a vitamin B12-poisoning metabolite. The sequence is that of Methylglutaconyl-CoA hydratase, mitochondrial from Rattus norvegicus (Rat).